Reading from the N-terminus, the 233-residue chain is C-type lectin domain-containing protein 87 (233 aa).

Positions 1-19 (MRFCLLVAFILPGLFLVHA) are cleaved as a signal peptide. An O-linked (Xyl...) (chondroitin sulfate) serine glycan is attached at Ser-31. Asn-81 carries N-linked (GlcNAc...) asparagine glycosylation. The region spanning 93 to 223 (FADSCYWIEK…CTYMLYSICE (131 aa)) is the C-type lectin domain. 2 disulfides stabilise this stretch: Cys-114–Cys-222 and Cys-193–Cys-214. An N-linked (GlcNAc...) asparagine glycan is attached at Asn-225.

The chain is C-type lectin domain-containing protein 87 from Caenorhabditis elegans.